The sequence spans 351 residues: Photosystem II D2 protein (351 aa).

The chain crosses the membrane as a helical span at residues 39–59 (TAYLAIGGWLTGTTFVTSWYT). Residue histidine 116 coordinates chlorophyll a. The chain crosses the membrane as a helical span at residues 123–139 (GFMLRQFEIARLVGIRP). Residues glutamine 128 and asparagine 141 each coordinate pheophytin a. The helical transmembrane segment at 151–164 (VFVSVFLMYPLGQS) threads the bilayer. Histidine 196 lines the chlorophyll a pocket. Residues 206–226 (GALLCAIHGATVENTLFEDGE) traverse the membrane as a helical segment. The a plastoquinone site is built by histidine 213 and phenylalanine 260. Position 213 (histidine 213) interacts with Fe cation. Histidine 267 provides a ligand contact to Fe cation. A helical transmembrane segment spans residues 277-293 (GLWTSSIGIIGLALNLR).

Belongs to the reaction center PufL/M/PsbA/D family. As to quaternary structure, PSII is composed of 1 copy each of membrane proteins PsbA, PsbB, PsbC, PsbD, PsbE, PsbF, PsbH, PsbI, PsbJ, PsbK, PsbL, PsbM, PsbT, PsbX, PsbY, PsbZ, Psb30/Ycf12, peripheral proteins PsbO, CyanoQ (PsbQ), PsbU, PsbV and a large number of cofactors. It forms dimeric complexes. The cofactor is The D1/D2 heterodimer binds P680, chlorophylls that are the primary electron donor of PSII, and subsequent electron acceptors. It shares a non-heme iron and each subunit binds pheophytin, quinone, additional chlorophylls, carotenoids and lipids. There is also a Cl(-1) ion associated with D1 and D2, which is required for oxygen evolution. The PSII complex binds additional chlorophylls, carotenoids and specific lipids..

It is found in the cellular thylakoid membrane. It catalyses the reaction 2 a plastoquinone + 4 hnu + 2 H2O = 2 a plastoquinol + O2. Photosystem II (PSII) is a light-driven water:plastoquinone oxidoreductase that uses light energy to abstract electrons from H(2)O, generating O(2) and a proton gradient subsequently used for ATP formation. It consists of a core antenna complex that captures photons, and an electron transfer chain that converts photonic excitation into a charge separation. The D1/D2 (PsbA/PsbD) reaction center heterodimer binds P680, the primary electron donor of PSII as well as several subsequent electron acceptors. D2 is needed for assembly of a stable PSII complex. This Synechococcus sp. (strain CC9605) protein is Photosystem II D2 protein.